Reading from the N-terminus, the 421-residue chain is UDP-N-acetylglucosamine 1-carboxyvinyltransferase (421 aa).

Position 22 to 23 (22 to 23 (KN)) interacts with phosphoenolpyruvate. Arginine 93 contributes to the UDP-N-acetyl-alpha-D-glucosamine binding site. Residue cysteine 117 is the Proton donor of the active site. 2-(S-cysteinyl)pyruvic acid O-phosphothioketal is present on cysteine 117. UDP-N-acetyl-alpha-D-glucosamine contacts are provided by residues 122–126 (RPVDL), aspartate 308, and isoleucine 330.

It belongs to the EPSP synthase family. MurA subfamily.

It localises to the cytoplasm. The enzyme catalyses phosphoenolpyruvate + UDP-N-acetyl-alpha-D-glucosamine = UDP-N-acetyl-3-O-(1-carboxyvinyl)-alpha-D-glucosamine + phosphate. The protein operates within cell wall biogenesis; peptidoglycan biosynthesis. Cell wall formation. Adds enolpyruvyl to UDP-N-acetylglucosamine. In Pseudomonas putida (strain GB-1), this protein is UDP-N-acetylglucosamine 1-carboxyvinyltransferase.